Consider the following 194-residue polypeptide: Peptidyl-tRNA hydrolase (194 aa).

Tyrosine 17 lines the tRNA pocket. Histidine 22 acts as the Proton acceptor in catalysis. The tRNA site is built by phenylalanine 68, asparagine 70, and asparagine 116.

This sequence belongs to the PTH family. As to quaternary structure, monomer.

It is found in the cytoplasm. The enzyme catalyses an N-acyl-L-alpha-aminoacyl-tRNA + H2O = an N-acyl-L-amino acid + a tRNA + H(+). Its function is as follows. Hydrolyzes ribosome-free peptidyl-tRNAs (with 1 or more amino acids incorporated), which drop off the ribosome during protein synthesis, or as a result of ribosome stalling. In terms of biological role, catalyzes the release of premature peptidyl moieties from peptidyl-tRNA molecules trapped in stalled 50S ribosomal subunits, and thus maintains levels of free tRNAs and 50S ribosomes. This chain is Peptidyl-tRNA hydrolase, found in Haemophilus influenzae (strain 86-028NP).